Here is a 312-residue protein sequence, read N- to C-terminus: Gamma-soluble NSF attachment protein (312 aa).

The disordered stretch occupies residues 281–312 (KKKSPATPQAKPDGAAGMAAEEEEDEYSGGLC). At Ser-284 the chain carries Phosphoserine. Residue Thr-287 is modified to Phosphothreonine. The span at 300–312 (AEEEEDEYSGGLC) shows a compositional bias: acidic residues. Ser-308 bears the Phosphoserine mark.

It belongs to the SNAP family. As to quaternary structure, interacts with RAB11FIP5. Interacts with VTI1A. In terms of tissue distribution, abundantly expressed in the heart, liver and kidneys with lower expression in the brain, spleen, lung, muscle and testes.

The protein resides in the membrane. It is found in the golgi apparatus. Functionally, required for vesicular transport between the endoplasmic reticulum and the Golgi apparatus. The chain is Gamma-soluble NSF attachment protein from Mus musculus (Mouse).